A 77-amino-acid chain; its full sequence is Serine protease inhibitor 3 (77 aa).

The first 17 residues, 1-17, serve as a signal peptide directing secretion; the sequence is MMFTPLIVLTLLVLATA. 4 disulfide bridges follow: C21–C53, C30–C48, C33–C44, and C55–C68. The TIL domain occupies 21-74; that stretch reads CGPNEQWSGCPKCELQSGESDKPCATICGEPKCYCSPDKYRRIPDGRCIRKIQC.

The protein resides in the secreted. Defends the organism against the host's proteinases. This is Serine protease inhibitor 3 from Anisakis simplex (Herring worm).